A 152-amino-acid chain; its full sequence is Ribosome maturation factor RimP (152 aa).

The protein belongs to the RimP family.

The protein localises to the cytoplasm. Functionally, required for maturation of 30S ribosomal subunits. This Erwinia tasmaniensis (strain DSM 17950 / CFBP 7177 / CIP 109463 / NCPPB 4357 / Et1/99) protein is Ribosome maturation factor RimP.